The chain runs to 172 residues: Putative phosphoesterase BcerKBAB4_1135 (172 aa).

Catalysis depends on His-34, which acts as the Proton donor. 2 short sequence motifs (HXTX) span residues 34–37 and 115–118; these read HITL and HLTI. His-115 serves as the catalytic Proton acceptor.

It belongs to the 2H phosphoesterase superfamily. YjcG family.

The chain is Putative phosphoesterase BcerKBAB4_1135 from Bacillus mycoides (strain KBAB4) (Bacillus weihenstephanensis).